Consider the following 71-residue polypeptide: ATP synthase subunit c 1 (71 aa).

Transmembrane regions (helical) follow at residues 4 to 24 (FIGAGLATIGLGGAGIGVGHV) and 46 to 66 (LFVGIAFAEALGIFSFLIALL).

The protein belongs to the ATPase C chain family. F-type ATPases have 2 components, F(1) - the catalytic core - and F(0) - the membrane proton channel. F(1) has five subunits: alpha(3), beta(3), gamma(1), delta(1), epsilon(1). F(0) has four main subunits: a(1), b(1), b'(1) and c(10-14). The alpha and beta chains form an alternating ring which encloses part of the gamma chain. F(1) is attached to F(0) by a central stalk formed by the gamma and epsilon chains, while a peripheral stalk is formed by the delta, b and b' chains.

It is found in the cell inner membrane. Functionally, f(1)F(0) ATP synthase produces ATP from ADP in the presence of a proton or sodium gradient. F-type ATPases consist of two structural domains, F(1) containing the extramembraneous catalytic core and F(0) containing the membrane proton channel, linked together by a central stalk and a peripheral stalk. During catalysis, ATP synthesis in the catalytic domain of F(1) is coupled via a rotary mechanism of the central stalk subunits to proton translocation. Its function is as follows. Key component of the F(0) channel; it plays a direct role in translocation across the membrane. A homomeric c-ring of between 10-14 subunits forms the central stalk rotor element with the F(1) delta and epsilon subunits. The polypeptide is ATP synthase subunit c 1 (Cereibacter sphaeroides (strain ATCC 17029 / ATH 2.4.9) (Rhodobacter sphaeroides)).